The primary structure comprises 64 residues: Conotoxin mr5.3 (64 aa).

The first 19 residues, 1 to 19 (MRCVPVFVILLLLIASVPS), serve as a signal peptide directing secretion. Positions 20-48 (VDAQLKTKDDMPLASSHANVKRTLQILRN) are excised as a propeptide. A 4-carboxyglutamate mark is found at Glu56 and Glu60.

In terms of processing, contains 2 disulfide bonds that can be either 'C1-C3, C2-C4' or 'C1-C4, C2-C3', since these disulfide connectivities have been observed for conotoxins with cysteine framework V (for examples, see AC P0DQQ7 and AC P81755). As to expression, expressed by the venom duct.

The protein localises to the secreted. The chain is Conotoxin mr5.3 from Conus marmoreus (Marble cone).